Reading from the N-terminus, the 269-residue chain is Imidazoleglycerol-phosphate dehydratase 1, chloroplastic (269 aa).

Disordered stretches follow at residues 1 to 31 and 54 to 73; these read MTTA…GSGG and SGVG…VSSR. The N-terminal 52 residues, 1 to 52, are a transit peptide targeting the chloroplast; that stretch reads MTTAPFVSPSLPRLHSARASPFPKPSVGSGGGVAFPARTYGSSLRLRSAVMS. Substrate contacts are provided by residues glutamate 83, 109–117, 135–139, arginine 161, and arginine 183; these read HMLDQLASH and HHSNE. Residues histidine 109, histidine 135, histidine 136, and glutamate 139 each coordinate Mn(2+). Mn(2+)-binding residues include histidine 207, histidine 231, histidine 232, and glutamate 235. Substrate contacts are provided by residues 231 to 239 and 261 to 263; these read HHIIEATFK and SSK.

The protein belongs to the imidazoleglycerol-phosphate dehydratase family. It depends on Mn(2+) as a cofactor.

Its subcellular location is the plastid. It localises to the chloroplast. The enzyme catalyses D-erythro-1-(imidazol-4-yl)glycerol 3-phosphate = 3-(imidazol-4-yl)-2-oxopropyl phosphate + H2O. It functions in the pathway amino-acid biosynthesis; L-histidine biosynthesis; L-histidine from 5-phospho-alpha-D-ribose 1-diphosphate: step 6/9. The sequence is that of Imidazoleglycerol-phosphate dehydratase 1, chloroplastic from Triticum aestivum (Wheat).